The following is a 707-amino-acid chain: MDKLDLVNDGLDIIDFIQKNQKEIQKTYGRSSIQQPSTKDRTRAWEDFLQSTSGEHEQAEGGMPKNDGGTEGRNVEDLSSVTSSDGTIGQRVSNTRAWAEDPDDIQLDPMVTDVVYHDHGGECTGHGPSSSPERGWSYHMSGTHDGNVRAVPDTKVLPNAPKTTVPEEVREIDLIGLEDKFASAGLNPAAVPFVPKNQSTPTEEPPVIPEYYYGSGRRGDLSKSPPRGNVNLDSIKIYTSDDEDENQLEYEDEFAKSSSEVVIDTTPEDNDSINQEEVVGDPSDQGLEHPFPLGKFPEKEETPDVRRKDSLMQDSCKRGGVPKRLPMLSEEFECSGSDDPIIQELEREGSHPGGSLRLREPPQSSGNSRNQPDRQLKTGDAASPGGVQRPGTPMPKSRIMPIKKGTDAKSQYVGTEDVPGSKSGATRYVRGLPPNQESKSVTAENVQLSAPSAVTRNEGHDQEVTSNEDSLDDKYIMPSDDFANTFLPHDTDRLNYHADHLNDYDLETLCEESVLMGIVNAIKLINIDMRLNHIEEQMKEIPKIINKIDSIDRVLAKTNTALSTIEGHLVSMMIMIPGKGKGERKGKTNPELKPVIGRNILEQQELFSFDNLKNFRDGSLTDEPYGGVARIRDDLILPELNFSETNASQFVPLADDASKDVVRTMIRTHIKDRELRSELMDYLNRAETDEEVQEVANTVNDIIDGNI.

Residues 1–35 (MDKLDLVNDGLDIIDFIQKNQKEIQKTYGRSSIQQ) are N0 binding. 4 disordered regions span residues 26-103 (KTYG…EDPD), 193-229 (FVPK…PRGN), 254-446 (FAKS…AENV), and 454-473 (VTRN…SLDD). Composition is skewed to polar residues over residues 28–37 (YGRSSIQQPS) and 77–96 (DLSS…SNTR). Serine 257 bears the Phosphoserine; by host mark. Positions 296-317 (FPEKEETPDVRRKDSLMQDSCK) are enriched in basic and acidic residues. The residue at position 350 (serine 350) is a Phosphoserine; by host. Residues 435–446 (NQESKSVTAENV) show a composition bias toward polar residues. The multimerization stretch occupies residues 473–578 (DKYIMPSDDF…LVSMMIMIPG (106 aa)).

In terms of assembly, homotetramer. Interacts (via multimerization domain) with polymerase L; this interaction forms the polymerase L-P complex. Interacts (via N-terminus) with N0 (via Ncore); this interaction allows P to chaperon N0 to avoid N polymerization before encapsidation. Interacts (via C-terminus) with N-RNA template; this interaction positions the polymerase on the template for both transcription and replication.

Functionally, essential cofactor of the RNA polymerase L that plays a central role in the transcription and replication by forming the polymerase complex with RNA polymerase L and recruiting L to the genomic N-RNA template for RNA synthesis. Also plays a central role in the encapsidation of nascent RNA chains by forming the encapsidation complex with the nucleocapsid protein N (N-P complex). Acts as a chaperone for newly synthesized free N protein, so-called N0, allowing encapsidation of nascent RNA chains during replication. The nucleoprotein protein N prevents excessive phosphorylation of P, which leads to down-regulation of viral transcription/ replication. Participates, together with N, in the formation of viral factories (viroplasms), which are large inclusions in the host cytoplasm where replication takes place. In Equus caballus (Horse), this protein is Phosphoprotein (P/V/C).